The sequence spans 331 residues: Phosphate acyltransferase (331 aa).

The protein belongs to the PlsX family. As to quaternary structure, homodimer. Probably interacts with PlsY.

It is found in the cytoplasm. The enzyme catalyses a fatty acyl-[ACP] + phosphate = an acyl phosphate + holo-[ACP]. Its pathway is lipid metabolism; phospholipid metabolism. In terms of biological role, catalyzes the reversible formation of acyl-phosphate (acyl-PO(4)) from acyl-[acyl-carrier-protein] (acyl-ACP). This enzyme utilizes acyl-ACP as fatty acyl donor, but not acyl-CoA. The sequence is that of Phosphate acyltransferase from Mesoplasma florum (strain ATCC 33453 / NBRC 100688 / NCTC 11704 / L1) (Acholeplasma florum).